Consider the following 613-residue polypeptide: Phostensin (613 aa).

The span at 15 to 33 (RRQEEASVRGREKAERERL) shows a compositional bias: basic and acidic residues. Disordered regions lie at residues 15–231 (RRQE…SAYQ) and 266–505 (GEER…GKKR). Ser-54, Ser-125, Ser-133, Ser-175, and Ser-195 each carry phosphoserine. Composition is skewed to basic and acidic residues over residues 104 to 154 (RSEE…ERRL) and 167 to 191 (LEAR…EPWK). A Phosphothreonine modification is found at Thr-199. Over residues 199–221 (TPERSLRLAESREQSPRRKEVES) the composition is skewed to basic and acidic residues. Ser-224 is modified (phosphoserine). Basic and acidic residues predominate over residues 266-282 (GEERQGYSEKCGRKEEW). Positions 301–310 (REAQGSSSTG) are enriched in polar residues. Basic and acidic residues-rich tracts occupy residues 314–327 (AEQR…RGMK), 340–350 (KAREWTPRDIE), and 357–367 (EPSESAEKRLE). 2 positions are modified to phosphoserine: Ser-368 and Ser-432. The segment covering 424 to 446 (QPPPPAPLSPPPPAPTAPQPPGD) has biased composition (pro residues). At Lys-457 the chain carries N6-acetyllysine. Residues 476 to 499 (PRRSVPPTTPATPTSPATADAAVP) show a composition bias toward low complexity. A phosphoserine mark is found at Ser-490 and Ser-530. Residues 552 to 594 (QYPSESSVLEELGPEPEVPSAPNPPAAQPDDEEDEEELLLLQP) form a disordered region. Residues 567 to 578 (PEVPSAPNPPAA) are compositionally biased toward pro residues. The span at 580-589 (PDDEEDEEEL) shows a compositional bias: acidic residues.

As to quaternary structure, interacts with Protein phosphatase 1 (PP1).

Its subcellular location is the cytoplasm. It is found in the cytoskeleton. In terms of biological role, may target protein phosphatase 1 to F-actin cytoskeleton. The protein is Phostensin (PPP1R18) of Macaca mulatta (Rhesus macaque).